Here is a 154-residue protein sequence, read N- to C-terminus: Aminoalkylphosphonate N-acetyltransferase (154 aa).

The 141-residue stretch at 14 to 154 (CELRHATTED…QSHFRFTKAL (141 aa)) folds into the N-acetyltransferase domain.

In terms of assembly, homodimer. It depends on a divalent metal cation as a cofactor.

It catalyses the reaction aminomethylphosphonate + acetyl-CoA = 2-N-acetamidomethylphosphonate + CoA. It carries out the reaction (S)-1-aminoethylphosphonate + acetyl-CoA = [(1S)-1-acetamidoethyl]phosphonate + CoA. Aminoalkylphosphonate N-acetyltransferase which is able to acetylate a range of aminoalkylphosphonic acids, including (S)-1-aminoethylphosphonate ((S)-1AEP) and 2-aminoethylphosphonate, using acetyl-CoA as acetyl donor. Its physiological role in S.typhimurium is unclear. However, by acetylating (S)-1AEP, PhnO would protect against the deleterious effects of (S)-1AEP, a structural analog of D-alanine that has antibacterial properties. The protein is Aminoalkylphosphonate N-acetyltransferase of Salmonella typhimurium (strain LT2 / SGSC1412 / ATCC 700720).